Consider the following 451-residue polypeptide: Cysteine desulfurase (451 aa).

5 residues coordinate pyridoxal 5'-phosphate: Ala121, Thr122, Gln229, Ser249, and His251. Lys252 bears the N6-(pyridoxal phosphate)lysine mark. Thr289 contacts pyridoxal 5'-phosphate. The active-site Cysteine persulfide intermediate is Cys375. Residue Cys375 participates in [2Fe-2S] cluster binding. A Zn(2+)-binding site is contributed by Cys375. Cys375 carries the cysteine persulfide modification.

Belongs to the class-V pyridoxal-phosphate-dependent aminotransferase family. NifS/IscS subfamily. Homodimer. Component of the mitochondrial core iron-sulfur cluster (ISC) complex composed of NFS1, LYRM4, NDUFAB1, ISCU, FXN, and FDX2; this complex is a heterohexamer containing two copies of each monomer. Component of cyteine desulfurase complex composed of NFS1, LYRM4 and NDUFAB1; this complex contributes to the activation of cysteine desulfurase activity and NFS1 stabilization. Interacts (homodimer form) with ISCU (D-state); each monomer interacts with the C-terminal regions of each NFS1 monomer. Interacts with HSPA9. Interacts (via homodimer form) with FDX2. Interacts (via homodimer form) with FXN. Interacts with LYRM4. Component of a complex composed of FXN, NFS1, LYRM4 and ISCU. In terms of assembly, monomer. Homodimer. Oligomer. Interacts with ISCU. Component of the cysteine desulfurase complex composed of NFS1 and LYRM4; this complex contributes to the activation of cysteine desulfurase activity. Interacts with MOCS3. Requires pyridoxal 5'-phosphate as cofactor. In terms of processing, N-gluconoylated. Cysteine persulfide intermediate is reduced by thiol-containing molecules like glutathione and L-cysteine. Persulfide reduction is a rate-limiting step of cysteine desulfurase catalytic cycle.

The protein localises to the mitochondrion. It localises to the cytoplasm. Its subcellular location is the nucleus. The protein resides in the cytoskeleton. It is found in the microtubule organizing center. The protein localises to the centrosome. The catalysed reaction is (sulfur carrier)-H + L-cysteine = (sulfur carrier)-SH + L-alanine. It catalyses the reaction L-cysteinyl-[cysteine desulfurase] + L-cysteine = S-sulfanyl-L-cysteinyl-[cysteine desulfurase] + L-alanine. Its activity is regulated as follows. Active only in complex with LYRM4. Cysteine desulfurase, of the core iron-sulfur cluster (ISC) assembly complex, that catalyzes the desulfuration of L-cysteine to L-alanine, as component of the cysteine desulfurase complex leading to the formation of a cysteine persulfide intermediate at the active site cysteine residue and participates in the [2Fe-2S] clusters assembly on the scaffolding protein ISCU. The persulfide is then transferred on the flexible Cys loop from the catalytic site of NFS1 to the surface of NFS1. After the NFS1-linked persulfide sulfur is transferred to one of the conserved Cys residues of the scaffold, a reaction assisted by FXN. The core iron-sulfur cluster (ISC) assembly complex is involved in the de novo synthesis of a [2Fe-2S] cluster, the first step of the mitochondrial iron-sulfur protein biogenesis. This process is initiated by the cysteine desulfurase complex (NFS1:LYRM4:NDUFAB1) that produces persulfide which is delivered on the scaffold protein ISCU in a FXN-dependent manner. Then this complex is stabilized by FDX2 which provides reducing equivalents to accomplish the [2Fe-2S] cluster assembly. Finally, the [2Fe-2S] cluster is transferred from ISCU to chaperone proteins, including HSCB, HSPA9 and GLRX5. In terms of biological role, may catalyze the desulfuration of L-cysteine to L-alanine as component of the cysteine desulfurase complex (NFS1:LYRM4), leading to the formation of a cysteine persulfide intermediate. Acts as a sulfur donor for MOCS3 by transferring the sulfur of the cysteine persulfide intermediate on MOCS3. This Rattus norvegicus (Rat) protein is Cysteine desulfurase.